Here is a 696-residue protein sequence, read N- to C-terminus: Elongation factor G (696 aa).

The tr-type G domain occupies 10–290 (THFRNIGIAA…AVVDYLPSPL (281 aa)). GTP is bound by residues 19–26 (AHIDAGKT), 89–93 (DTPGH), and 143–146 (NKMD).

It belongs to the TRAFAC class translation factor GTPase superfamily. Classic translation factor GTPase family. EF-G/EF-2 subfamily.

The protein resides in the cytoplasm. Catalyzes the GTP-dependent ribosomal translocation step during translation elongation. During this step, the ribosome changes from the pre-translocational (PRE) to the post-translocational (POST) state as the newly formed A-site-bound peptidyl-tRNA and P-site-bound deacylated tRNA move to the P and E sites, respectively. Catalyzes the coordinated movement of the two tRNA molecules, the mRNA and conformational changes in the ribosome. The protein is Elongation factor G of Deinococcus geothermalis (strain DSM 11300 / CIP 105573 / AG-3a).